The sequence spans 205 residues: Probable GTP-binding protein EngB (205 aa).

The region spanning 25 to 199 (NGIEIAFIGY…KLSLNSSYKK (175 aa)) is the EngB-type G domain. Residues 33 to 40 (GYSNTGKS), 60 to 64 (GRTQL), 78 to 81 (DLPG), 145 to 148 (TKCD), and 178 to 180 (FSS) contribute to the GTP site. Mg(2+)-binding residues include S40 and T62.

The protein belongs to the TRAFAC class TrmE-Era-EngA-EngB-Septin-like GTPase superfamily. EngB GTPase family. Mg(2+) is required as a cofactor.

Necessary for normal cell division and for the maintenance of normal septation. The chain is Probable GTP-binding protein EngB from Buchnera aphidicola subsp. Acyrthosiphon pisum (strain 5A).